Consider the following 460-residue polypeptide: tRNA modification GTPase MnmE (460 aa).

(6S)-5-formyl-5,6,7,8-tetrahydrofolate is bound by residues R29, E91, and K132. A TrmE-type G domain is found at 227-383 (GISIALIGKT…LIDTIIKKCG (157 aa)). N237 contributes to the K(+) binding site. GTP contacts are provided by residues 237–242 (NVGKSS), 256–262 (TNIPGTT), and 281–284 (DTAG). S241 contacts Mg(2+). The K(+) site is built by T256, I258, and T261. T262 serves as a coordination point for Mg(2+). K460 contributes to the (6S)-5-formyl-5,6,7,8-tetrahydrofolate binding site.

It belongs to the TRAFAC class TrmE-Era-EngA-EngB-Septin-like GTPase superfamily. TrmE GTPase family. As to quaternary structure, homodimer. Heterotetramer of two MnmE and two MnmG subunits. The cofactor is K(+).

The protein resides in the cytoplasm. In terms of biological role, exhibits a very high intrinsic GTPase hydrolysis rate. Involved in the addition of a carboxymethylaminomethyl (cmnm) group at the wobble position (U34) of certain tRNAs, forming tRNA-cmnm(5)s(2)U34. The sequence is that of tRNA modification GTPase MnmE from Prochlorococcus marinus (strain AS9601).